Reading from the N-terminus, the 325-residue chain is Pyruvate dehydrogenase E1 component subunit beta (325 aa).

Glu-60 lines the thiamine diphosphate pocket.

Heterodimer of an alpha and a beta chain. The cofactor is thiamine diphosphate.

The catalysed reaction is N(6)-[(R)-lipoyl]-L-lysyl-[protein] + pyruvate + H(+) = N(6)-[(R)-S(8)-acetyldihydrolipoyl]-L-lysyl-[protein] + CO2. The pyruvate dehydrogenase complex catalyzes the overall conversion of pyruvate to acetyl-CoA and CO(2). It contains multiple copies of three enzymatic components: pyruvate dehydrogenase (E1), dihydrolipoamide acetyltransferase (E2) and lipoamide dehydrogenase (E3). This chain is Pyruvate dehydrogenase E1 component subunit beta (pdhB), found in Geobacillus stearothermophilus (Bacillus stearothermophilus).